The primary structure comprises 284 residues: 4-diphosphocytidyl-2-C-methyl-D-erythritol kinase (284 aa).

Residue K9 is part of the active site. 90–100 (PLVSGLGGDSS) is an ATP binding site. D132 is an active-site residue.

Belongs to the GHMP kinase family. IspE subfamily.

The catalysed reaction is 4-CDP-2-C-methyl-D-erythritol + ATP = 4-CDP-2-C-methyl-D-erythritol 2-phosphate + ADP + H(+). Its pathway is isoprenoid biosynthesis; isopentenyl diphosphate biosynthesis via DXP pathway; isopentenyl diphosphate from 1-deoxy-D-xylulose 5-phosphate: step 3/6. Its function is as follows. Catalyzes the phosphorylation of the position 2 hydroxy group of 4-diphosphocytidyl-2C-methyl-D-erythritol. The polypeptide is 4-diphosphocytidyl-2-C-methyl-D-erythritol kinase (Dehalococcoides mccartyi (strain ATCC BAA-2100 / JCM 16839 / KCTC 5957 / BAV1)).